Here is a 360-residue protein sequence, read N- to C-terminus: MQDRIRKIIHVDMDCFFAAVEMRDNPAYREIALAVGGHEKQRGVISTCNYQARKFGVRSAMPTAQALKLCPQLHVVPGRMSVYKSVSQQIQTIFQRYTSLIEPLSLDEAYLDVSESTAYQGSATLIAQAIRRDIWQELNLTASAGVAPIKFLAKVASDLNKPNGLYVVTPDKVQEMVDSLPLEKIPGVGKVALEKLHQAGLYVGADVRRADYRKLLHQFGRLGASLWKKSHGIDEREVVTERERKSVGVEYTFSQNISTFQECWQVIEQKLYPELDARLSRAHPQRGIIKQGIKVKFADFQQTTIEHVHPALELDYFHELLEQVLTRQQGREIRLLGLSVMLKPELQMKQLSMFPSDGWQ.

The 182-residue stretch at 8-189 folds into the UmuC domain; it reads IIHVDMDCFF…LPLEKIPGVG (182 aa). Asp-12 and Asp-107 together coordinate Mg(2+). Residue Glu-108 is part of the active site.

It belongs to the DNA polymerase type-Y family. As to quaternary structure, monomer. The cofactor is Mg(2+).

The protein resides in the cytoplasm. The catalysed reaction is DNA(n) + a 2'-deoxyribonucleoside 5'-triphosphate = DNA(n+1) + diphosphate. Poorly processive, error-prone DNA polymerase involved in untargeted mutagenesis. Copies undamaged DNA at stalled replication forks, which arise in vivo from mismatched or misaligned primer ends. These misaligned primers can be extended by PolIV. Exhibits no 3'-5' exonuclease (proofreading) activity. May be involved in translesional synthesis, in conjunction with the beta clamp from PolIII. The sequence is that of DNA polymerase IV from Vibrio cholerae serotype O1 (strain ATCC 39541 / Classical Ogawa 395 / O395).